A 695-amino-acid polypeptide reads, in one-letter code: MAFETFSVALDKDKTLIFETGKIARQASGAVLVKMNETWVFSSACAASLSEAVDFLPFRVDYQEKFSSAGRTSGGFLKREGRPSEREILVSRLMDRSLRPSFPNRLMQDIQVLSYVWSYDGKTLPDPLAICGASAALAISEVPQNCIVAGVRVGLVGGKWVINPTRDELSASKLDLVMAGTASAVLMIEGHCDFLTEEQVLEAIAFGQTYIAKICDAIEAWQKAIGKQKNFSAVLDMPEDVQNVVSDFIREKFEKALSFRDKEALEQASKELEESVIANLVQEENSDFSLLNVKAAFKTAKSNQMRALIQDLGIRVDGRTTTEIRPISIETPFLPRTHGSCLFTRGETQSMAVCTLGGENMAQRFEDLNGDGAARFYLQYFFPPFSVGEVGRIGSPGRREIGHGKLAEKALSHVLPETSRFPYIIRLESNITESNGSSSMASVCGGCLALMDAGVPIKAPVAGIAMGLILDRDQAIILSDISGIEDHLGDMDFKVAGTAKGITAFQMDIKIEGITHKIMEQALAQAKQGRSHILNLMTQVLASPKGTVSKYAPRIETMQINTSKIATVIGPGGKQIRQIIERSGAQVDINDDGVINIAASTQESINKAKELIEGLTGEVEVGKVYNGRVTSIATFGVFVEVLPGKEGLCHISELSKQKVDNISDFVKEGDKLAVKLLSINEKGQLKLSHKATLED.

The Mg(2+) site is built by aspartate 486 and aspartate 492. The region spanning 553–612 (PRIETMQINTSKIATVIGPGGKQIRQIIERSGAQVDINDDGVINIAASTQESINKAKELI) is the KH domain. Residues 622 to 690 (GKVYNGRVTS…EKGQLKLSHK (69 aa)) form the S1 motif domain.

It belongs to the polyribonucleotide nucleotidyltransferase family. It depends on Mg(2+) as a cofactor.

The protein resides in the cytoplasm. The enzyme catalyses RNA(n+1) + phosphate = RNA(n) + a ribonucleoside 5'-diphosphate. In terms of biological role, involved in mRNA degradation. Catalyzes the phosphorolysis of single-stranded polyribonucleotides processively in the 3'- to 5'-direction. The sequence is that of Polyribonucleotide nucleotidyltransferase from Chlamydia trachomatis serovar D (strain ATCC VR-885 / DSM 19411 / UW-3/Cx).